We begin with the raw amino-acid sequence, 137 residues long: Protein ApaG (137 aa).

The 125-residue stretch at 2 to 126 folds into the ApaG domain; the sequence is PKYQFQVQVQ…FVLEAFSPGQ (125 aa).

This chain is Protein ApaG, found in Acidovorax sp. (strain JS42).